We begin with the raw amino-acid sequence, 126 residues long: Holo-[acyl-carrier-protein] synthase (126 aa).

Mg(2+) contacts are provided by aspartate 9 and glutamate 57.

It belongs to the P-Pant transferase superfamily. AcpS family. It depends on Mg(2+) as a cofactor.

The protein localises to the cytoplasm. It carries out the reaction apo-[ACP] + CoA = holo-[ACP] + adenosine 3',5'-bisphosphate + H(+). Its function is as follows. Transfers the 4'-phosphopantetheine moiety from coenzyme A to a Ser of acyl-carrier-protein. The polypeptide is Holo-[acyl-carrier-protein] synthase (Pseudoalteromonas atlantica (strain T6c / ATCC BAA-1087)).